Consider the following 441-residue polypeptide: 3-phosphoshikimate 1-carboxyvinyltransferase (441 aa).

3 residues coordinate 3-phosphoshikimate: Lys-26, Ser-27, and Arg-31. Lys-26 contacts phosphoenolpyruvate. Phosphoenolpyruvate contacts are provided by Gly-99 and Arg-127. Residues Ser-173, Ser-174, Gln-175, Ser-203, Asp-320, and Lys-347 each coordinate 3-phosphoshikimate. Gln-175 contributes to the phosphoenolpyruvate binding site. Asp-320 functions as the Proton acceptor in the catalytic mechanism. 3 residues coordinate phosphoenolpyruvate: Arg-351, Arg-393, and Lys-423.

Belongs to the EPSP synthase family. In terms of assembly, monomer.

It is found in the cytoplasm. It carries out the reaction 3-phosphoshikimate + phosphoenolpyruvate = 5-O-(1-carboxyvinyl)-3-phosphoshikimate + phosphate. Its pathway is metabolic intermediate biosynthesis; chorismate biosynthesis; chorismate from D-erythrose 4-phosphate and phosphoenolpyruvate: step 6/7. In terms of biological role, catalyzes the transfer of the enolpyruvyl moiety of phosphoenolpyruvate (PEP) to the 5-hydroxyl of shikimate-3-phosphate (S3P) to produce enolpyruvyl shikimate-3-phosphate and inorganic phosphate. This Janthinobacterium sp. (strain Marseille) (Minibacterium massiliensis) protein is 3-phosphoshikimate 1-carboxyvinyltransferase.